The primary structure comprises 2183 residues: Coagulation factor V (2183 aa).

Positions 1 to 19 are cleaved as a signal peptide; that stretch reads MLLVCPCFFLLVVLGTRWA. Plastocyanin-like domains follow at residues 30-192, 202-328, 347-524, and 534-682; these read QLRQ…LLIC, TQKM…IKNC, KRWE…LLIC, and VQRV…DVKC. F5/8 type A domains follow at residues 30 to 328 and 347 to 682; these read QLRQ…IKNC and KRWE…DVKC. Positions 138 and 139 each coordinate Ca(2+). 3 N-linked (GlcNAc...) asparagine glycosylation sites follow: Asn176, Asn238, and Asn381. Residue Thr638 is modified to Phosphothreonine. Residues 691-1533 form a b region; the sequence is SYEIYEPPAP…PDTIAAWYLR (843 aa). Sulfotyrosine is present on residues Tyr692 and Tyr725. The propeptide at 737–1533 is activation peptide (connecting region); sequence SFKNSSLNPE…PDTIAAWYLR (797 aa). Asn841 is a glycosylation site (N-linked (GlcNAc...) asparagine). Disordered stretches follow at residues 884–904, 947–1045, and 1059–1144; these read PAGK…MKSE, DVDK…FPDR, and ETAL…YDLS. Residues 892-908 form a 1 X 17 AA tandem repeats region; that stretch reads SNPKNSYSGMKSEEDIP. Residues 892 to 911 form a 1-1 repeat; sequence SNPKNSYSGMKSEEDIPSEL. Ser903 is subject to Phosphoserine. The span at 951 to 975 shows a compositional bias: polar residues; that stretch reads LTNSPQNQNITVPRGESTSHTNTTR. N-linked (GlcNAc...) asparagine glycans are attached at residues Asn959 and Asn972. Residues 1010–1021 show a composition bias toward basic residues; that stretch reads RTRKKKKNKKLA. Polar residues-rich tracts occupy residues 1059–1099 and 1120–1134; these read ETAL…SLDL and THST…SPPE. 32 consecutive repeat copies span residues 1175–1183, 1184–1192, 1193–1201, 1202–1210, 1211–1219, 1220–1228, 1229–1237, 1238–1246, 1247–1255, 1256–1264, 1265–1273, 1274–1282, 1283–1291, 1292–1299, 1300–1308, 1309–1316, 1317–1325, 1326–1334, 1335–1341, 1342–1350, 1351–1359, 1360–1368, 1369–1377, 1378–1386, 1387–1395, 1396–1404, 1405–1413, 1414–1422, 1423–1431, 1432–1440, 1441–1449, and 1452–1461. The 32 X 9 AA approximate tandem repeats of [TNP]-L-S-P-D-L-S-Q-T stretch occupies residues 1175–1461; sequence IPSSDLSLFT…PSPSPTLNNT (287 aa). Residues 1204 to 1312 are disordered; sequence SPEDNQKTSS…PDLGQVPLFP (109 aa). Residues 1228–1251 are compositionally biased toward polar residues; it reads KTSSPDLGQVSLSPDDNQKTSSPD. A compositionally biased stretch (polar residues) spans 1292–1304; that stretch reads PLSSDNQKTSSPD. Positions 1403–1462 are disordered; it reads QTNPALNHGHKASSADPDQASYPPDSGQASSLPELNRTLPHPDLTHIPPPSPSPTLNNTS. Residue Asn1438 is glycosylated (N-linked (GlcNAc...) asparagine). Plastocyanin-like domains lie at 1538 to 1711 and 1721 to 1866; these read HKKF…LLIC and NLPM…DKEC. Residues 1538–1866 enclose the F5/8 type A 3 domain; the sequence is HKKFYYIAAE…TPFLIIDKEC (329 aa). Residues His1802 and His1804 each contribute to the Cu cation site. Residue Asn1811 is glycosylated (N-linked (GlcNAc...) asparagine). 2 F5/8 type C domains span residues 1866-2020 and 2025-2180; these read CKMP…LQGC and CSTP…LFGC. Cystine bridges form between Cys1866–Cys2020 and Cys2025–Cys2180.

The protein belongs to the multicopper oxidase family. As to quaternary structure, factor Va, the activated form of factor V, is composed of a heavy chain and a light chain, non-covalently bound. The interaction between the two chains is calcium-dependent. Forms heterodimer with SERPINA5. Thrombin activates factor V proteolytically to the active cofactor, factor Va (formation of a heavy chain at the N-terminus and a light chain at the C-terminus). In terms of processing, sulfation is required for efficient thrombin cleavage and activation and for full procoagulant activity. Post-translationally, activated protein C inactivates factor V and factor Va by proteolytic degradation.

It is found in the secreted. Its activity is regulated as follows. Inhibited by SERPINA5. Functionally, central regulator of hemostasis. It serves as a critical cofactor for the prothrombinase activity of factor Xa that results in the activation of prothrombin to thrombin. This Mus musculus (Mouse) protein is Coagulation factor V (F5).